Consider the following 83-residue polypeptide: uncharacterized protein (83 aa).

This sequence belongs to the BolA/IbaG family.

This is an uncharacterized protein from Acinetobacter guillouiae (Acinetobacter genomosp. 11).